We begin with the raw amino-acid sequence, 140 residues long: Thioredoxin M-type, chloroplastic (140 aa).

The N-terminal 34 residues, 1–34, are a transit peptide targeting the chloroplast; it reads MALVARRAAVPSARSSARPAFARAAPRRSVVVRA. A Thioredoxin domain is found at 35–140; that stretch reads EAGAVNDDTF…IVQTVEKYLN (106 aa). Residues Cys64 and Cys67 each act as nucleophile in the active site. An intrachain disulfide couples Cys64 to Cys67.

This sequence belongs to the thioredoxin family. Plant M-type subfamily. In terms of assembly, forms a complex with heterodimeric ferredoxin-thioredoxin reductase (FTR) and ferredoxin.

The protein localises to the plastid. It is found in the chloroplast. Functionally, participates in various redox reactions through the reversible oxidation of the active center dithiol to a disulfide. The M form is known to activate NADP-malate dehydrogenase. The sequence is that of Thioredoxin M-type, chloroplastic (TRXM) from Chlamydomonas reinhardtii (Chlamydomonas smithii).